We begin with the raw amino-acid sequence, 247 residues long: Cytochrome c oxidase subunit 2 (247 aa).

Residues 12–38 (DVPTPWGLYFQDSSTPNQEGIIELHDN) lie on the Mitochondrial intermembrane side of the membrane. The chain crosses the membrane as a helical span at residues 39 to 59 (IMFYLVLILCTVSWLLFSIVK). At 60–78 (DSSKNPLPHKYLVHGQTIE) the chain is on the mitochondrial matrix side. A helical transmembrane segment spans residues 79-101 (IIWTILPAVVLLIIAFPSFILLY). At 102-247 (LCDEVISPAM…KEFLTWLNEQ (146 aa)) the chain is on the mitochondrial intermembrane side. Residues His-182, Cys-217, Glu-219, Cys-221, His-225, and Met-228 each contribute to the Cu cation site. Position 219 (Glu-219) interacts with Mg(2+).

It belongs to the cytochrome c oxidase subunit 2 family. Component of the cytochrome c oxidase (complex IV, CIV), a multisubunit enzyme composed of a catalytic core of 3 subunits and several supernumerary subunits. The complex exists as a monomer or a dimer and forms supercomplexes (SCs) in the inner mitochondrial membrane with ubiquinol-cytochrome c oxidoreductase (cytochrome b-c1 complex, complex III, CIII). Requires Cu cation as cofactor. The signal sequence of COX2 is processed by IMP1.

The protein localises to the mitochondrion inner membrane. It catalyses the reaction 4 Fe(II)-[cytochrome c] + O2 + 8 H(+)(in) = 4 Fe(III)-[cytochrome c] + 2 H2O + 4 H(+)(out). In terms of biological role, component of the cytochrome c oxidase, the last enzyme in the mitochondrial electron transport chain which drives oxidative phosphorylation. The respiratory chain contains 3 multisubunit complexes succinate dehydrogenase (complex II, CII), ubiquinol-cytochrome c oxidoreductase (cytochrome b-c1 complex, complex III, CIII) and cytochrome c oxidase (complex IV, CIV), that cooperate to transfer electrons derived from NADH and succinate to molecular oxygen, creating an electrochemical gradient over the inner membrane that drives transmembrane transport and the ATP synthase. Cytochrome c oxidase is the component of the respiratory chain that catalyzes the reduction of oxygen to water. Electrons originating from reduced cytochrome c in the intermembrane space (IMS) are transferred via the dinuclear copper A center (CU(A)) of subunit 2 and heme A of subunit 1 to the active site in subunit 1, a binuclear center (BNC) formed by heme A3 and copper B (CU(B)). The BNC reduces molecular oxygen to 2 water molecules using 4 electrons from cytochrome c in the IMS and 4 protons from the mitochondrial matrix. The protein is Cytochrome c oxidase subunit 2 (COX2) of Cyberlindnera saturnus (Yeast).